The following is a 352-amino-acid chain: Leukotriene B4 receptor 1 (352 aa).

Topologically, residues 1–19 (MNTTSSAAPPSLGVEFISL) are extracellular. A glycan (N-linked (GlcNAc...) asparagine) is linked at Asn-2. The chain crosses the membrane as a helical span at residues 20–42 (LAIILLSVALAVGLPGNSFVVWS). The Cytoplasmic segment spans residues 43-54 (ILKRMQKRSVTA). The chain crosses the membrane as a helical span at residues 55–75 (LMVLNLALADLAVLLTAPFFL). Residues 76-91 (HFLAQGTWSFGLAGCR) lie on the Extracellular side of the membrane. Residues 92–113 (LCHYVCGVSMYASVLLITAMSL) traverse the membrane as a helical segment. The Cytoplasmic segment spans residues 114–138 (DRSLAVARPFVSQKLRTKAMARRVL). Residues 139–159 (AGIWVLSFLLATPVLAYRTVV) form a helical membrane-spanning segment. Topologically, residues 160–178 (PWKTNMSLCFPRYPSEGHR) are extracellular. Asn-164 carries an N-linked (GlcNAc...) asparagine glycan. Residues 179–199 (AFHLIFEAVTGFLLPFLAVVA) form a helical membrane-spanning segment. Over 200–221 (SYSDIGRRLQARRFRRSRRTGR) the chain is Cytoplasmic. Residues 222 to 242 (LVVLIILTFAAFWLPYHVVNL) form a helical membrane-spanning segment. Residues 243-268 (AEAGRALAGQAAGLGLVGKRLSLARN) lie on the Extracellular side of the membrane. The chain crosses the membrane as a helical span at residues 269–289 (VLIALAFLSSSVNPVLYACAG). Residues 290-352 (GGLLRSAGVG…SSPLKLNELN (63 aa)) are Cytoplasmic-facing. Composition is skewed to polar residues over residues 310 to 326 (SEAS…QTAR) and 338 to 352 (ESLT…NELN). Residues 310-352 (SEASSTRRGGSLGQTARSGPAALEPGPSESLTASSPLKLNELN) form a disordered region.

Belongs to the G-protein coupled receptor 1 family. Phosphorylated by GRK6 upon leukotriene B4 binding; which promotes desensitization. In terms of tissue distribution, expressed at highest levels in heart, skeletal muscle and at lower levels in brain and liver. High level of expression in lymphoid tissues.

It localises to the cell membrane. Receptor for extracellular ATP &gt; UTP and ADP. The activity of this receptor is mediated by G proteins which activate a phosphatidylinositol-calcium second messenger system. May be the cardiac P2Y receptor involved in the regulation of cardiac muscle contraction through modulation of L-type calcium currents. Is a receptor for leukotriene B4, a potent chemoattractant involved in inflammation and immune response. The polypeptide is Leukotriene B4 receptor 1 (LTB4R) (Homo sapiens (Human)).